A 591-amino-acid chain; its full sequence is Polyphenol oxidase D, chloroplastic (591 aa).

The transit peptide at 1–83 directs the protein to the chloroplast; that stretch reads MASLCSNSST…ANAIPLAASA (83 aa). 2 disulfide bridges follow: Cys94-Cys110 and Cys109-Cys177. 6 residues coordinate Cu cation: His176, His194, His203, His324, His328, and His366. Positions 180-194 form a cross-link, 2'-(S-cysteinyl)-histidine (Cys-His); it reads CNGAYRIGGKELQVH.

Belongs to the tyrosinase family. Requires Cu(2+) as cofactor.

The protein localises to the plastid. It localises to the chloroplast thylakoid lumen. The catalysed reaction is 2 catechol + O2 = 2 1,2-benzoquinone + 2 H2O. Functionally, catalyzes the oxidation of mono- and o-diphenols to o-diquinones. The sequence is that of Polyphenol oxidase D, chloroplastic from Solanum lycopersicum (Tomato).